The primary structure comprises 352 residues: Probable RNA methyltransferase Mpe_A3613 (352 aa).

The active-site Proton acceptor is Glu88. Positions Leu91–Asp317 constitute a Radical SAM core domain. The cysteines at positions 98 and 322 are disulfide-linked. Cys105, Cys109, and Cys112 together coordinate [4Fe-4S] cluster. S-adenosyl-L-methionine-binding positions include Gly150–Glu151, Ser180, Ser203–His205, and Asn279. Residue Cys322 is the S-methylcysteine intermediate of the active site.

This sequence belongs to the radical SAM superfamily. RlmN family. It depends on [4Fe-4S] cluster as a cofactor.

The protein localises to the cytoplasm. The chain is Probable RNA methyltransferase Mpe_A3613 from Methylibium petroleiphilum (strain ATCC BAA-1232 / LMG 22953 / PM1).